The primary structure comprises 123 residues: Thioredoxin domain-containing protein 17 (123 aa).

Residue Ala-2 is modified to N-acetylalanine. The Thioredoxin domain maps to 41 to 123 (SWCPDCVQAE…NLVEMLFSED (83 aa)). Residues Cys-43 and Cys-46 each act as nucleophile in the active site. Cys-43 and Cys-46 form a disulfide bridge.

This sequence belongs to the thioredoxin family. Interacts with TRXR1 and DYNLL1/DNCL1. The oxidized protein is reduced by TRXR1. Ubiquitously expressed in cell lines.

The protein localises to the cytoplasm. Functionally, disulfide reductase. May participate in various redox reactions through the reversible oxidation of its active center dithiol to a disulfide and catalyze dithiol-disulfide exchange reactions. Modulates TNF-alpha signaling and NF-kappa-B activation. Has peroxidase activity and may contribute to the elimination of cellular hydrogen peroxide. This Homo sapiens (Human) protein is Thioredoxin domain-containing protein 17 (TXNDC17).